The following is a 401-amino-acid chain: Argininosuccinate synthase (401 aa).

9–17 provides a ligand contact to ATP; that stretch reads AYSGGLDTS. Tyr86 serves as a coordination point for L-citrulline. Gly116 is a binding site for ATP. Positions 118, 122, and 123 each coordinate L-aspartate. Asn122 lines the L-citrulline pocket. L-citrulline-binding residues include Arg126, Ser174, Ser183, Glu259, and Tyr271.

This sequence belongs to the argininosuccinate synthase family. Type 1 subfamily. As to quaternary structure, homotetramer.

It localises to the cytoplasm. The catalysed reaction is L-citrulline + L-aspartate + ATP = 2-(N(omega)-L-arginino)succinate + AMP + diphosphate + H(+). Its pathway is amino-acid biosynthesis; L-arginine biosynthesis; L-arginine from L-ornithine and carbamoyl phosphate: step 2/3. This chain is Argininosuccinate synthase, found in Bacillus cytotoxicus (strain DSM 22905 / CIP 110041 / 391-98 / NVH 391-98).